We begin with the raw amino-acid sequence, 497 residues long: Acetyl-coenzyme A carboxylase carboxyl transferase subunit beta, chloroplastic (497 aa).

Residues 30 to 50 (GPVENTTVNEDPTRNDTDKNI) form a disordered region. The segment covering 40 to 50 (DPTRNDTDKNI) has biased composition (basic and acidic residues). The 268-residue stretch at 230–497 (VQCECENCYG…FFPLNQNSIK (268 aa)) folds into the CoA carboxyltransferase N-terminal domain. C232, C237, C253, and C256 together coordinate Zn(2+). The segment at 232-256 (CECENCYGVNYKKSLNSKMNICEQC) adopts a C4-type zinc-finger fold.

It belongs to the AccD/PCCB family. As to quaternary structure, acetyl-CoA carboxylase is a heterohexamer composed of biotin carboxyl carrier protein, biotin carboxylase and 2 subunits each of ACCase subunit alpha and ACCase plastid-coded subunit beta (accD). Zn(2+) serves as cofactor.

The protein resides in the plastid. It localises to the chloroplast stroma. It carries out the reaction N(6)-carboxybiotinyl-L-lysyl-[protein] + acetyl-CoA = N(6)-biotinyl-L-lysyl-[protein] + malonyl-CoA. It participates in lipid metabolism; malonyl-CoA biosynthesis; malonyl-CoA from acetyl-CoA: step 1/1. In terms of biological role, component of the acetyl coenzyme A carboxylase (ACC) complex. Biotin carboxylase (BC) catalyzes the carboxylation of biotin on its carrier protein (BCCP) and then the CO(2) group is transferred by the transcarboxylase to acetyl-CoA to form malonyl-CoA. The sequence is that of Acetyl-coenzyme A carboxylase carboxyl transferase subunit beta, chloroplastic from Gossypium hirsutum (Upland cotton).